A 156-amino-acid polypeptide reads, in one-letter code: Ribosomal RNA large subunit methyltransferase H (156 aa).

Residues Leu-72, Gly-103, and 122 to 127 (LSSLTL) each bind S-adenosyl-L-methionine.

The protein belongs to the RNA methyltransferase RlmH family. Homodimer.

Its subcellular location is the cytoplasm. The enzyme catalyses pseudouridine(1915) in 23S rRNA + S-adenosyl-L-methionine = N(3)-methylpseudouridine(1915) in 23S rRNA + S-adenosyl-L-homocysteine + H(+). Its function is as follows. Specifically methylates the pseudouridine at position 1915 (m3Psi1915) in 23S rRNA. This chain is Ribosomal RNA large subunit methyltransferase H, found in Dechloromonas aromatica (strain RCB).